The chain runs to 181 residues: Large ribosomal subunit protein uL5 (181 aa).

Belongs to the universal ribosomal protein uL5 family. In terms of assembly, part of the 50S ribosomal subunit; part of the 5S rRNA/L5/L18/L25 subcomplex. Contacts the 5S rRNA and the P site tRNA. Forms a bridge to the 30S subunit in the 70S ribosome.

This is one of the proteins that bind and probably mediate the attachment of the 5S RNA into the large ribosomal subunit, where it forms part of the central protuberance. In the 70S ribosome it contacts protein S13 of the 30S subunit (bridge B1b), connecting the 2 subunits; this bridge is implicated in subunit movement. Contacts the P site tRNA; the 5S rRNA and some of its associated proteins might help stabilize positioning of ribosome-bound tRNAs. The chain is Large ribosomal subunit protein uL5 from Acaryochloris marina (strain MBIC 11017).